The chain runs to 152 residues: Small ribosomal subunit protein uS15 (152 aa).

Basic residues predominate over residues 1-10 (MAKMHTRTKG). The segment at 1–26 (MAKMHTRTKGKSGSTKPIRSESPAWS) is disordered. Positions 11-26 (KSGSTKPIRSESPAWS) are enriched in polar residues.

It belongs to the universal ribosomal protein uS15 family. As to quaternary structure, part of the 30S ribosomal subunit.

In Methanococcoides burtonii (strain DSM 6242 / NBRC 107633 / OCM 468 / ACE-M), this protein is Small ribosomal subunit protein uS15.